Here is a 415-residue protein sequence, read N- to C-terminus: Fructose-like permease IIC component (415 aa).

The Cytoplasmic segment spans residues 1–46 (MAIKKRSATVVPGASGAAAAVKNLQASKSSFWGELPQHVMSGISRM). The region spanning 35 to 415 (LPQHVMSGIS…RKGKLLIDSL (381 aa)) is the PTS EIIC type-2 domain. Residues 47–67 (VPTLIMGGVILAFSQLIAYSW) traverse the membrane as a helical segment. The Periplasmic segment spans residues 68–101 (LKIPAEIGIMDALNSGKFSGFDLSLLKFAWLSQS). Residues 102 to 122 (FGGVLFGFAIPMFAAFVANSI) traverse the membrane as a helical segment. The Cytoplasmic segment spans residues 123 to 126 (GGKL). The helical transmembrane segment at 127-147 (AFPAGFIGGLMSTQPTQLLNF) threads the bilayer. Over 148–157 (DPSTMQWATS) the chain is Periplasmic. A helical transmembrane segment spans residues 158–178 (SPVPSTFIGALIISIVAGYLV). The Cytoplasmic portion of the chain corresponds to 179 to 197 (KWMNQKIQLPDFLLAFKTT). The helical transmembrane segment at 198-218 (FLLPILSAIFVMLAMYYVITP) threads the bilayer. Over 219 to 237 (FGGWINGGIRTVLTAAGEK) the chain is Periplasmic. A helical membrane pass occupies residues 238–258 (GALMYAMGIAAATAIDLGGPI). Topologically, residues 259–276 (NKAAGFVAFSFTTDHVLP) are cytoplasmic. Residues 277–297 (VTARSIAIVIPPIGLGLATII) traverse the membrane as a helical segment. Over 298-318 (DRRLTGKRLFNAQLYPQGKTA) the chain is Periplasmic. The helical transmembrane segment at 319-339 (MFLAFMGISEGAIPFALESPI) threads the bilayer. The Cytoplasmic segment spans residues 340–341 (TA). The helical transmembrane segment at 342 to 362 (IPSYMVGAIVGSTAAVWLGAV) threads the bilayer. Over 363 to 378 (QWFPESAIWAWPLVTN) the chain is Periplasmic. A helical membrane pass occupies residues 379–399 (LGVYMAGIALGAIITALMVVF). The Cytoplasmic portion of the chain corresponds to 400 to 415 (LRLMMFRKGKLLIDSL).

It is found in the cell inner membrane. In terms of biological role, the phosphoenolpyruvate-dependent sugar phosphotransferase system (PTS), a major carbohydrate active -transport system, catalyzes the phosphorylation of incoming sugar substrates concomitant with their translocation across the cell membrane. The chain is Fructose-like permease IIC component (fryC) from Shigella flexneri.